A 391-amino-acid polypeptide reads, in one-letter code: uncharacterized protein (391 aa).

A compositionally biased stretch (low complexity) spans Ser118–Pro149. 4 disordered regions span residues Ser118–Pro162, Gln184–Asn258, Asn272–Asn327, and Leu337–Asn356. The span at Gln150–Pro162 shows a compositional bias: basic residues. Low complexity predominate over residues Asn186 to Asn211. Positions Asp212 to Thr223 are enriched in polar residues. The segment covering Asn244 to Pro256 has biased composition (low complexity).

This is an uncharacterized protein from Dictyostelium discoideum (Social amoeba).